Here is a 300-residue protein sequence, read N- to C-terminus: 17-beta-hydroxysteroid dehydrogenase 13 (300 aa).

An N-terminal signal peptide occupies residues 1–19 (MNLILELLLLVGIIIYSYL). The residue at position 33 (Ser-33) is a Phosphoserine. Position 40–67 (40–67 (LITGAGHGIGRLTAYEFAKQKSRLVLWD)) interacts with NAD(+). Phosphoserine is present on Ser-69. Lys-79 is modified (N6-acetyllysine). Position 172 (Ser-172) interacts with substrate. Residue Tyr-185 is the Proton acceptor of the active site. Lys-189 lines the NAD(+) pocket.

It belongs to the short-chain dehydrogenases/reductases (SDR) family.

Its subcellular location is the lipid droplet. The protein localises to the endoplasmic reticulum. It catalyses the reaction 17beta-estradiol + NAD(+) = estrone + NADH + H(+). It carries out the reaction all-trans-retinol + NAD(+) = all-trans-retinal + NADH + H(+). The catalysed reaction is all-trans-retinal + NAD(+) + H2O = all-trans-retinoate + NADH + 2 H(+). In terms of biological role, plays a pivotal role in hepatic lipid metabolism. In vitro, it catalyzes the oxidation of a variety of lipid substrates, including 17beta-estradiol, retinol, retinal, and leukotriene B4. This is 17-beta-hydroxysteroid dehydrogenase 13 (Hsd17b13) from Rattus norvegicus (Rat).